A 142-amino-acid chain; its full sequence is Transcriptional regulator MraZ (142 aa).

SpoVT-AbrB domains follow at residues 5 to 51 and 77 to 120; these read ASAL…PRPE and AMDV…DSQT.

This sequence belongs to the MraZ family. As to quaternary structure, forms oligomers.

It is found in the cytoplasm. It localises to the nucleoid. This chain is Transcriptional regulator MraZ, found in Burkholderia multivorans (strain ATCC 17616 / 249).